The chain runs to 465 residues: Cysteine--tRNA ligase (465 aa).

Cysteine 29 contributes to the Zn(2+) binding site. Positions proline 31–asparagine 41 match the 'HIGH' region motif. Zn(2+) is bound by residues cysteine 209, histidine 234, and glutamate 238. The 'KMSKS' region signature appears at lysine 266–serine 270. Lysine 269 is a binding site for ATP. Residue serine 270 is modified to Phosphoserine.

The protein belongs to the class-I aminoacyl-tRNA synthetase family. In terms of assembly, monomer. Zn(2+) serves as cofactor.

The protein resides in the cytoplasm. It carries out the reaction tRNA(Cys) + L-cysteine + ATP = L-cysteinyl-tRNA(Cys) + AMP + diphosphate. In Bacillus cytotoxicus (strain DSM 22905 / CIP 110041 / 391-98 / NVH 391-98), this protein is Cysteine--tRNA ligase.